Reading from the N-terminus, the 48-residue chain is uncharacterized protein (48 aa).

Its subcellular location is the mitochondrion. This is an uncharacterized protein from Emericella nidulans (Aspergillus nidulans).